The following is a 234-amino-acid chain: Methylamine utilization ferredoxin-type protein MauM (234 aa).

4 4Fe-4S ferredoxin-type domains span residues 61 to 91 (ALAE…LASW), 98 to 131 (GTPF…PLLT), 140 to 176 (VAVL…LKPI), and 184 to 215 (QIPT…VLPR). [4Fe-4S] cluster contacts are provided by cysteine 71, cysteine 74, cysteine 77, cysteine 81, cysteine 109, cysteine 112, cysteine 117, cysteine 121, cysteine 149, cysteine 157, cysteine 160, cysteine 164, cysteine 193, cysteine 196, cysteine 199, and cysteine 203.

Its pathway is one-carbon metabolism; methylamine degradation. In terms of biological role, involved in electron transfer. The protein is Methylamine utilization ferredoxin-type protein MauM (mauM) of Methylobacillus flagellatus (strain ATCC 51484 / DSM 6875 / VKM B-1610 / KT).